Here is a 429-residue protein sequence, read N- to C-terminus: Glutamate-1-semialdehyde 2,1-aminomutase 2 (429 aa).

At K268 the chain carries N6-(pyridoxal phosphate)lysine.

It belongs to the class-III pyridoxal-phosphate-dependent aminotransferase family. HemL subfamily. As to quaternary structure, homodimer. Pyridoxal 5'-phosphate is required as a cofactor.

Its subcellular location is the cytoplasm. The catalysed reaction is (S)-4-amino-5-oxopentanoate = 5-aminolevulinate. It functions in the pathway porphyrin-containing compound metabolism; protoporphyrin-IX biosynthesis; 5-aminolevulinate from L-glutamyl-tRNA(Glu): step 2/2. The protein is Glutamate-1-semialdehyde 2,1-aminomutase 2 of Listeria monocytogenes serotype 4a (strain HCC23).